The chain runs to 183 residues: 1,6-anhydro-N-acetylmuramyl-L-alanine amidase AmpD (183 aa).

The N-acetylmuramoyl-L-alanine amidase domain maps to 30–167; that stretch reads LLVVHNISLP…APDRKTDPGP (138 aa). Zn(2+) is bound at residue His-34. Glu-116 (proton acceptor) is an active-site residue. Zn(2+) is bound by residues His-154 and Asp-164.

The protein belongs to the N-acetylmuramoyl-L-alanine amidase 2 family. Zn(2+) is required as a cofactor.

The protein localises to the cytoplasm. The catalysed reaction is Hydrolyzes the link between N-acetylmuramoyl residues and L-amino acid residues in certain cell-wall glycopeptides.. Its function is as follows. Involved in cell wall peptidoglycan recycling. Specifically cleaves the amide bond between the lactyl group of N-acetylmuramic acid and the alpha-amino group of the L-alanine in degradation products containing an anhydro N-acetylmuramyl moiety. Is also involved in beta-lactamase induction. This is 1,6-anhydro-N-acetylmuramyl-L-alanine amidase AmpD (ampD) from Escherichia coli (strain K12).